The chain runs to 544 residues: MKKRFIFITGGVVSSLGKGITTAALAAVLEARNLNVTIIKLDPYINIDPGTISPEQHGEVFVTEDGAETDLDLGHYERFIRTKMTRKNNFTTGSIYSEVLNKERKGEYLGATIQIIPHITNTIKKRIISCAHNVDIVFVEVGGTVGDIESLPFLEAIRQIAIDIGRENTIYIHLTLVPYISITKEIKTKPTQHSVKELLSIGIQPDILICRSQYTIPIQARSKIALFCNVLKESVISLINVDSIYKIPKLLNLQKVDQIICHHFKLKVPPADLSEWDEVIYNELNTNNVVTIGIIGKYIKSPDAYKSVIEALKHGGIKNKTVVKIKLINSEKIEKNGTNRLNCLHGILIPGGFGHRGITGKLITVEYARINNVPFFGICLGMQIALIEFFRNVIGLKDANSTEFSQNCQHPIISLIPKGNRNLPNINNNVKKKLGGTMRLGNQTCYLKQDSISHKLYGKNIISERHRHRYEVNNKFINKIEKYGLKITGKSKKNKLVEIIELSNHLWFIACQFHPEFTSTPRDGHPLFIDFIKAAIQYKKIKQK.

The amidoligase domain stretch occupies residues 1 to 266 (MKKRFIFITG…DQIICHHFKL (266 aa)). Residue Ser14 coordinates CTP. Ser14 lines the UTP pocket. ATP-binding positions include 15–20 (SLGKGI) and Asp72. Mg(2+)-binding residues include Asp72 and Glu140. Residues 147 to 149 (DIE), 187 to 192 (KTKPTQ), and Lys223 each bind CTP. UTP is bound by residues 187–192 (KTKPTQ) and Lys223. Positions 291–541 (TIGIIGKYIK…IKAAIQYKKI (251 aa)) constitute a Glutamine amidotransferase type-1 domain. Gly352 is an L-glutamine binding site. The active-site Nucleophile; for glutamine hydrolysis is Cys379. L-glutamine is bound by residues 380 to 383 (LGMQ), Glu403, and Arg469. Active-site residues include His514 and Glu516.

This sequence belongs to the CTP synthase family. As to quaternary structure, homotetramer.

It carries out the reaction UTP + L-glutamine + ATP + H2O = CTP + L-glutamate + ADP + phosphate + 2 H(+). It catalyses the reaction L-glutamine + H2O = L-glutamate + NH4(+). The catalysed reaction is UTP + NH4(+) + ATP = CTP + ADP + phosphate + 2 H(+). The protein operates within pyrimidine metabolism; CTP biosynthesis via de novo pathway; CTP from UDP: step 2/2. Allosterically activated by GTP, when glutamine is the substrate; GTP has no effect on the reaction when ammonia is the substrate. The allosteric effector GTP functions by stabilizing the protein conformation that binds the tetrahedral intermediate(s) formed during glutamine hydrolysis. Inhibited by the product CTP, via allosteric rather than competitive inhibition. Functionally, catalyzes the ATP-dependent amination of UTP to CTP with either L-glutamine or ammonia as the source of nitrogen. Regulates intracellular CTP levels through interactions with the four ribonucleotide triphosphates. The chain is CTP synthase from Buchnera aphidicola subsp. Baizongia pistaciae (strain Bp).